Reading from the N-terminus, the 140-residue chain is Cytochrome c-type biogenesis protein CcmE (140 aa).

Over 1 to 7 (MKRKHKR) the chain is Cytoplasmic. Residues 8–28 (LLFVLASFCAAGCALLFILSE) form a helical; Signal-anchor for type II membrane protein membrane-spanning segment. Residues 29-140 (LRESVSFFYT…TAPKSSPEPK (112 aa)) lie on the Periplasmic side of the membrane. Residues His-121 and Tyr-125 each contribute to the heme site.

It belongs to the CcmE/CycJ family.

The protein localises to the cell inner membrane. Heme chaperone required for the biogenesis of c-type cytochromes. Transiently binds heme delivered by CcmC and transfers the heme to apo-cytochromes in a process facilitated by CcmF and CcmH. The chain is Cytochrome c-type biogenesis protein CcmE from Anaplasma marginale (strain St. Maries).